Consider the following 511-residue polypeptide: NAD(P)H-quinone oxidoreductase subunit 2, chloroplastic (511 aa).

The next 14 membrane-spanning stretches (helical) occupy residues L15 to F35, V39 to L59, S78 to S98, A108 to G128, L132 to Y152, L167 to L187, F210 to A230, P244 to T264, W278 to I298, M306 to N326, L334 to F354, V377 to F397, G410 to L430, and L466 to I486.

The protein belongs to the complex I subunit 2 family. NDH is composed of at least 16 different subunits, 5 of which are encoded in the nucleus.

The protein localises to the plastid. Its subcellular location is the chloroplast thylakoid membrane. It carries out the reaction a plastoquinone + NADH + (n+1) H(+)(in) = a plastoquinol + NAD(+) + n H(+)(out). It catalyses the reaction a plastoquinone + NADPH + (n+1) H(+)(in) = a plastoquinol + NADP(+) + n H(+)(out). Functionally, NDH shuttles electrons from NAD(P)H:plastoquinone, via FMN and iron-sulfur (Fe-S) centers, to quinones in the photosynthetic chain and possibly in a chloroplast respiratory chain. The immediate electron acceptor for the enzyme in this species is believed to be plastoquinone. Couples the redox reaction to proton translocation, and thus conserves the redox energy in a proton gradient. The chain is NAD(P)H-quinone oxidoreductase subunit 2, chloroplastic from Chlorokybus atmophyticus (Soil alga).